The following is a 189-amino-acid chain: Ornithine decarboxylase antizyme 2 (189 aa).

Position 186 is a phosphoserine (Ser186).

This sequence belongs to the ODC antizyme family. In terms of assembly, interacts with ODC1 and thereby sterically blocks ODC homodimerization. Interacts with AZIN2; this interaction disrupts the interaction between the antizyme and ODC1.

The protein resides in the nucleus. Its function is as follows. Ornithine decarboxylase (ODC) antizyme protein that negatively regulates ODC activity and intracellular polyamine biosynthesis and uptake in response to increased intracellular polyamine levels. Binds to ODC monomers, inhibiting the assembly of the functional ODC homodimers. Does not target the ODC monomers for degradation, which allows a protein synthesis-independent restoration of ODC activity. Involved in the translocation of AZIN2 from ER-Golgi intermediate compartment (ERGIC) to the cytosol. The chain is Ornithine decarboxylase antizyme 2 (OAZ2) from Homo sapiens (Human).